The following is a 397-amino-acid chain: Putative nickel insertion protein (397 aa).

It belongs to the LarC family.

In Synechococcus sp. (strain JA-3-3Ab) (Cyanobacteria bacterium Yellowstone A-Prime), this protein is Putative nickel insertion protein.